Here is a 260-residue protein sequence, read N- to C-terminus: Adenosylcobinamide-GDP ribazoletransferase (260 aa).

Helical transmembrane passes span 40 to 60 (AFPF…LLLL), 64 to 84 (ADPL…TGAL), 117 to 137 (YGAI…AAIV), 142 to 162 (PLAA…AITW), 189 to 209 (FALV…FGLW), and 210 to 230 (PLVA…VFIR).

This sequence belongs to the CobS family. It depends on Mg(2+) as a cofactor.

The protein localises to the cell inner membrane. It carries out the reaction alpha-ribazole + adenosylcob(III)inamide-GDP = adenosylcob(III)alamin + GMP + H(+). It catalyses the reaction alpha-ribazole 5'-phosphate + adenosylcob(III)inamide-GDP = adenosylcob(III)alamin 5'-phosphate + GMP + H(+). It functions in the pathway cofactor biosynthesis; adenosylcobalamin biosynthesis; adenosylcobalamin from cob(II)yrinate a,c-diamide: step 7/7. Functionally, joins adenosylcobinamide-GDP and alpha-ribazole to generate adenosylcobalamin (Ado-cobalamin). Also synthesizes adenosylcobalamin 5'-phosphate from adenosylcobinamide-GDP and alpha-ribazole 5'-phosphate. The chain is Adenosylcobinamide-GDP ribazoletransferase from Rhizobium etli (strain CIAT 652).